A 424-amino-acid polypeptide reads, in one-letter code: Tubulin-specific chaperone cofactor E-like protein (424 aa).

Serine 18 and serine 41 each carry phosphoserine. LRR repeat units follow at residues 73–98, 99–123, 124–147, 150–172, 173–197, 199–224, and 226–250; these read CAHV…IVSN, VPQL…TCAG, SFSG…HMIL, LPDL…PSIC, CHSL…KLGV, FPSL…SLAR, and FPNL…KLNS. Positions 262 to 303 constitute an LRRCT domain; sequence IPLLQPYTTEERRKLVIARLPSVSKLNGSVVTDGEREDSERF. Positions 334 to 424 constitute a Ubiquitin-like domain; the sequence is AEVDLRPQSS…DKIYVESKTK (91 aa). Positions 349 to 375 form a coiled coil; sequence HFNDQVEEMSIRLDQTVAELKKQLKTL.

As to expression, abundantly expressed in testis, but is also present in several tissues at a much lower level.

The protein localises to the cytoplasm. It localises to the cytoskeleton. Functionally, acts as a regulator of tubulin stability. This chain is Tubulin-specific chaperone cofactor E-like protein (TBCEL), found in Homo sapiens (Human).